The sequence spans 1141 residues: Envelopment polyprotein (1141 aa).

The N-terminal stretch at 1 to 19 (MFCLCLSLLGLLLCWPAAT) is a signal peptide. Residues 20-489 (RNLLELKVEC…CVPGLHGWAT (470 aa)) lie on the Lumenal side of the membrane. Intrachain disulfides connect Cys29-Cys154, Cys63-Cys160, Cys112-Cys131, Cys136-Cys141, Cys178-Cys188, and Cys213-Cys252. A glycan (N-linked (GlcNAc...) asparagine; by host) is linked at Asn137. An N-linked (GlcNAc...) asparagine; by host glycan is attached at Asn352. 4 disulfides stabilise this stretch: Cys381-Cys440, Cys385-Cys394, Cys410-Cys429, and Cys457-Cys480. Asn404 carries an N-linked (GlcNAc...) asparagine; by host glycan. A helical membrane pass occupies residues 490–510 (ISLLITFCFGWLAIPLLSMII). Residues 511–632 (IRFLLIFTYL…LSMFRYKSKC (122 aa)) lie on the Cytoplasmic side of the membrane. Positions 521-538 (CSKYSTDSKFKLIIEKVK) are binding to the ribonucleoprotein. 2 CCHC-type zinc fingers span residues 550 to 570 (CEVC…KKSC) and 575 to 596 (CPYC…FKVC). Binding to the ribonucleoprotein regions lie at residues 593–610 (FKVC…KKSL), 597–608 (KLTTRFQENLKK), and 616–630 (KRGL…RYKS). The segment at 612 to 653 (TYEPKRGLYRTLSMFRYKSKCYVGLVWCILLTMELIVWAASA) is inhibition of interferon induction. The region spanning 616–639 (KRGLYRTLSMFRYKSKCYVGLVWC) is the ITAM domain. Phosphotyrosine is present on residues Tyr620 and Tyr633. A YxxL motif is present at residues 620 to 623 (YRTL). A helical transmembrane segment spans residues 633–653 (YVGLVWCILLTMELIVWAASA). Residues 654–1109 (ETINLEPGWT…EWLLGILSGN (456 aa)) lie on the Lumenal side of the membrane. Intrachain disulfides connect Cys740/Cys775, Cys744/Cys782, Cys756/Cys889, Cys770/Cys900, Cys785/Cys908, Cys811/Cys820, Cys828/Cys837, and Cys868/Cys872. The fusion loop stretch occupies residues 762-782 (FEFETGWGCNPPDCPGVGTGC). A glycan (N-linked (GlcNAc...) asparagine; by host) is linked at Asn932. 5 cysteine pairs are disulfide-bonded: Cys974-Cys1004, Cys997-Cys1049, Cys1014-Cys1019, Cys1050-Cys1055, and Cys1089-Cys1093. Residues 1110 to 1130 (WMVVAVLIALFIFSLLLFSLC) traverse the membrane as a helical segment. The tract at residues 1126 to 1141 (LFSLCCPRRQNYKKNK) is binding to the ribonucleoprotein. Topologically, residues 1131-1141 (CPRRQNYKKNK) are cytoplasmic.

This sequence belongs to the hantavirus envelope glycoprotein family. As to quaternary structure, homodimer. Homotetramer; forms heterotetrameric Gn-Gc spikes in the pre-fusion conformation. Interacts (via C-terminus) with the nucleoprotein. Interacts with host TUFM; this interaction contributes to the virus-induced degradation of mitochondria by autophagy, which leads to degradation of host MAVS and inhibition of type I interferon (IFN) responses. Interacts with host MAP1LC3B; this interaction contributes to the virus-induced degradation of mitochondria by autophagy, which leads to degradation of host MAVS and inhibition of type I interferon (IFN) responses. In terms of assembly, homodimer. Homotetramer; forms heterotetrameric Gn-Gc spikes in the pre-fusion conformation. Homotrimer; forms homotrimer in the post-fusion conformation at acidic pH. Interacts (via C-terminus) with the nucleoprotein. In terms of processing, envelope polyprotein precursor is quickly cleaved in vivo just after synthesis, presumably by host signal peptidase.

It localises to the virion membrane. It is found in the host cell surface. The protein resides in the host Golgi apparatus membrane. Its subcellular location is the host endoplasmic reticulum membrane. The protein localises to the host mitochondrion. Its function is as follows. Forms homotetramers with glycoprotein C at the surface of the virion. Attaches the virion to host cell receptors including integrin alpha5/ITGB1. This attachment induces virion internalization predominantly through clathrin-dependent endocytosis. Mediates the assembly and budding of infectious virus particles through its interaction with the nucleocapsid protein and the viral genome. May dysregulate normal immune and endothelial cell responses through an ITAM motif. Translocates to mitochondria, binds to host TUFM and recruits MAP1LC3B. These interactions induce mitochondrial autophagy and therefore destruction of host MAVS leading to inhibition of type I interferon (IFN) responses. Concomitant breakdown of glycoprotein N is apparently prevented by the nucleoprotein that may inhibit Gn-stimulated autophagosome-lysosome fusion. Interacts with the viral genomic RNA. Inhibits the host RIG-I/TBK1 pathway by disrupting the formation of TBK1-TRAF3 complexes and downstream signaling responses required for IFN-beta transcription. Forms homotetramers with glycoprotein N at the surface of the virion. Attaches the virion to host cell receptors including integrin ITGAV/ITGB3. This attachment induces virion internalization predominantly through clathrin-dependent endocytosis. Class II fusion protein that promotes fusion of viral membrane with host endosomal membrane after endocytosis of the virion. The sequence is that of Envelopment polyprotein (GP) from Tula orthohantavirus (TULV).